The chain runs to 430 residues: 3-phosphoshikimate 1-carboxyvinyltransferase (430 aa).

Positions 25, 26, and 30 each coordinate 3-phosphoshikimate. Lysine 25 lines the phosphoenolpyruvate pocket. Phosphoenolpyruvate contacts are provided by glycine 98 and arginine 126. The 3-phosphoshikimate site is built by serine 169, serine 170, glutamine 171, serine 198, glutamate 313, and histidine 342. Residue glutamine 171 coordinates phosphoenolpyruvate. Catalysis depends on glutamate 313, which acts as the Proton acceptor. The phosphoenolpyruvate site is built by arginine 346, arginine 387, and lysine 412.

The protein belongs to the EPSP synthase family. As to quaternary structure, monomer.

It localises to the cytoplasm. It catalyses the reaction 3-phosphoshikimate + phosphoenolpyruvate = 5-O-(1-carboxyvinyl)-3-phosphoshikimate + phosphate. Its pathway is metabolic intermediate biosynthesis; chorismate biosynthesis; chorismate from D-erythrose 4-phosphate and phosphoenolpyruvate: step 6/7. In terms of biological role, catalyzes the transfer of the enolpyruvyl moiety of phosphoenolpyruvate (PEP) to the 5-hydroxyl of shikimate-3-phosphate (S3P) to produce enolpyruvyl shikimate-3-phosphate and inorganic phosphate. The sequence is that of 3-phosphoshikimate 1-carboxyvinyltransferase from Mycobacterium leprae (strain TN).